The primary structure comprises 238 residues: Neuromodulin (238 aa).

The segment at 1 to 238 (MLCCMRRTKQ…EEPEADQEHA (238 aa)) is disordered. Residues cysteine 3 and cysteine 4 are each lipidated (S-palmitoyl cysteine). The span at 9-32 (KQVEKNDEDQKIEQDGIKPEDKAH) shows a compositional bias: basic and acidic residues. One can recognise an IQ domain in the interval 31–60 (AHKAATKIQASFRGHITRKKLKGEKKDDAQ). Residue serine 41 is modified to Phosphoserine; by PHK and PKC. Residues 54–83 (EKKDDAQAAEAEANKKDEAPVADGVEKKGE) show a composition bias toward basic and acidic residues. The segment covering 84–95 (GTTATEAAPATG) has biased composition (low complexity). Residues 97–116 (KPDEPGKAGETPSEEKKGEG) show a composition bias toward basic and acidic residues. Over residues 119–130 (ATEQAAPQAPAS) the composition is skewed to low complexity. A compositionally biased stretch (polar residues) spans 139 to 154 (ETESATKASTDNSPSS). 3 positions are modified to phosphoserine: serine 151, serine 153, and serine 154. Basic and acidic residues predominate over residues 155-167 (KAEDAPAKEEPKQ). Residues 168–199 (ADVPAAVTAAAATTPAAEDAAAKATAQPPTET) show a composition bias toward low complexity. The residue at position 181 (threonine 181) is a Phosphothreonine. Residues serine 202 and serine 203 each carry the phosphoserine; by CK2 modification. Basic and acidic residues predominate over residues 213-225 (DETKPKESARQDE). The span at 226–238 (GKEEEPEADQEHA) shows a compositional bias: acidic residues.

Belongs to the neuromodulin family. As to quaternary structure, identified in a complex containing FGFR4, NCAM1, CDH2, PLCG1, FRS2, SRC, SHC1, GAP43 and CTTN. Interacts (via IQ domain) with calmodulin. Binds calmodulin with a greater affinity in the absence of Ca(2+) than in its presence. Post-translationally, phosphorylated. Phosphorylation of this protein by a protein kinase C is specifically correlated with certain forms of synaptic plasticity. In terms of processing, palmitoylated by ZDHHC3. Palmitoylation is regulated by ARF6 and is essential for plasma membrane association and axonal and dendritic filopodia induction. Deacylated by LYPLA2.

Its subcellular location is the cell membrane. The protein resides in the cell projection. The protein localises to the growth cone membrane. It localises to the synapse. It is found in the filopodium membrane. Its subcellular location is the perikaryon. The protein resides in the dendrite. The protein localises to the axon. It localises to the cytoplasm. Functionally, this protein is associated with nerve growth. It is a major component of the motile 'growth cones' that form the tips of elongating axons. Plays a role in axonal and dendritic filopodia induction. This Macaca fascicularis (Crab-eating macaque) protein is Neuromodulin (GAP43).